A 376-amino-acid polypeptide reads, in one-letter code: Succinyl-diaminopimelate desuccinylase (376 aa).

His-67 provides a ligand contact to Zn(2+). Asp-69 is an active-site residue. A Zn(2+)-binding site is contributed by Asp-100. Glu-134 functions as the Proton acceptor in the catalytic mechanism. Glu-135, Glu-163, and His-349 together coordinate Zn(2+).

Belongs to the peptidase M20A family. DapE subfamily. Homodimer. It depends on Zn(2+) as a cofactor. Co(2+) serves as cofactor.

The enzyme catalyses N-succinyl-(2S,6S)-2,6-diaminopimelate + H2O = (2S,6S)-2,6-diaminopimelate + succinate. The protein operates within amino-acid biosynthesis; L-lysine biosynthesis via DAP pathway; LL-2,6-diaminopimelate from (S)-tetrahydrodipicolinate (succinylase route): step 3/3. In terms of biological role, catalyzes the hydrolysis of N-succinyl-L,L-diaminopimelic acid (SDAP), forming succinate and LL-2,6-diaminopimelate (DAP), an intermediate involved in the bacterial biosynthesis of lysine and meso-diaminopimelic acid, an essential component of bacterial cell walls. In Shewanella sediminis (strain HAW-EB3), this protein is Succinyl-diaminopimelate desuccinylase.